The sequence spans 286 residues: Ribosomal RNA small subunit methyltransferase A (286 aa).

S-adenosyl-L-methionine-binding residues include asparagine 28, leucine 30, glycine 55, glutamate 77, aspartate 103, and asparagine 123.

It belongs to the class I-like SAM-binding methyltransferase superfamily. rRNA adenine N(6)-methyltransferase family. RsmA subfamily.

Its subcellular location is the cytoplasm. The catalysed reaction is adenosine(1518)/adenosine(1519) in 16S rRNA + 4 S-adenosyl-L-methionine = N(6)-dimethyladenosine(1518)/N(6)-dimethyladenosine(1519) in 16S rRNA + 4 S-adenosyl-L-homocysteine + 4 H(+). Specifically dimethylates two adjacent adenosines (A1518 and A1519) in the loop of a conserved hairpin near the 3'-end of 16S rRNA in the 30S particle. May play a critical role in biogenesis of 30S subunits. The protein is Ribosomal RNA small subunit methyltransferase A of Bradyrhizobium sp. (strain BTAi1 / ATCC BAA-1182).